Consider the following 443-residue polypeptide: Anamorsin homolog (443 aa).

Residues 136–301 (LSSAPRVLVL…AAGVADALSG (166 aa)) are N-terminal SAM-like domain. A linker region spans residues 302 to 331 (NRGALPNGTAQTDGDDFIDESTLIDPTESY). The [2Fe-2S] cluster site is built by C341, C348, C351, and C353. A fe-S binding site A region spans residues 341–353 (CASRPKACPNCTC). [4Fe-4S] cluster contacts are provided by C380, C383, C391, and C394. 2 consecutive short sequence motifs (cx2C motif) follow at residues 380-383 (CGNC) and 391-394 (CAGC). Residues 380–394 (CGNCYLGDAFRCAGC) form a fe-S binding site B region.

This sequence belongs to the anamorsin family. As to quaternary structure, monomer. The cofactor is [2Fe-2S] cluster. It depends on [4Fe-4S] cluster as a cofactor.

Its subcellular location is the cytoplasm. The protein localises to the mitochondrion intermembrane space. Component of the cytosolic iron-sulfur (Fe-S) protein assembly (CIA) machinery. Required for the maturation of extramitochondrial Fe-S proteins. Part of an electron transfer chain functioning in an early step of cytosolic Fe-S biogenesis, facilitating the de novo assembly of a [4Fe-4S] cluster on the cytosolic Fe-S scaffold complex. Electrons are transferred from NADPH via a FAD- and FMN-containing diflavin oxidoreductase. Together with the diflavin oxidoreductase, also required for the assembly of the diferric tyrosyl radical cofactor of ribonucleotide reductase (RNR), probably by providing electrons for reduction during radical cofactor maturation in the catalytic small subunit. In Toxoplasma gondii (strain ATCC 50861 / VEG), this protein is Anamorsin homolog.